The primary structure comprises 143 residues: Large ribosomal subunit protein uL11 (143 aa).

This sequence belongs to the universal ribosomal protein uL11 family. Part of the ribosomal stalk of the 50S ribosomal subunit. Interacts with L10 and the large rRNA to form the base of the stalk. L10 forms an elongated spine to which L12 dimers bind in a sequential fashion forming a multimeric L10(L12)X complex. One or more lysine residues are methylated.

Its function is as follows. Forms part of the ribosomal stalk which helps the ribosome interact with GTP-bound translation factors. The sequence is that of Large ribosomal subunit protein uL11 from Borreliella burgdorferi (strain ATCC 35210 / DSM 4680 / CIP 102532 / B31) (Borrelia burgdorferi).